The following is a 232-amino-acid chain: Fibrillarin-like rRNA/tRNA 2'-O-methyltransferase (232 aa).

Residues 89-90 (TT), 108-109 (EF), 133-134 (DA), and 153-156 (DIAQ) each bind S-adenosyl-L-methionine.

This sequence belongs to the methyltransferase superfamily. Fibrillarin family. In terms of assembly, interacts with nop5. Component of box C/D small ribonucleoprotein (sRNP) particles that contain rpl7ae, FlpA and nop5, plus a guide RNA.

Its function is as follows. Involved in pre-rRNA and tRNA processing. Utilizes the methyl donor S-adenosyl-L-methionine to catalyze the site-specific 2'-hydroxyl methylation of ribose moieties in rRNA and tRNA. Site specificity is provided by a guide RNA that base pairs with the substrate. Methylation occurs at a characteristic distance from the sequence involved in base pairing with the guide RNA. The polypeptide is Fibrillarin-like rRNA/tRNA 2'-O-methyltransferase (Saccharolobus islandicus (strain L.S.2.15 / Lassen #1) (Sulfolobus islandicus)).